We begin with the raw amino-acid sequence, 290 residues long: 4-diphosphocytidyl-2-C-methyl-D-erythritol kinase (290 aa).

The active site involves lysine 14. 103 to 113 (PMGGGLGGGSS) is an ATP binding site. Aspartate 145 is a catalytic residue.

It belongs to the GHMP kinase family. IspE subfamily. As to quaternary structure, homodimer.

It catalyses the reaction 4-CDP-2-C-methyl-D-erythritol + ATP = 4-CDP-2-C-methyl-D-erythritol 2-phosphate + ADP + H(+). Its pathway is isoprenoid biosynthesis; isopentenyl diphosphate biosynthesis via DXP pathway; isopentenyl diphosphate from 1-deoxy-D-xylulose 5-phosphate: step 3/6. Catalyzes the phosphorylation of the position 2 hydroxy group of 4-diphosphocytidyl-2C-methyl-D-erythritol. This Pectobacterium carotovorum subsp. carotovorum (strain PC1) protein is 4-diphosphocytidyl-2-C-methyl-D-erythritol kinase.